The primary structure comprises 294 residues: 1D-myo-inositol 2-acetamido-2-deoxy-alpha-D-glucopyranoside deacetylase (294 aa).

Residues H13, D16, and H148 each coordinate Zn(2+).

The protein belongs to the MshB deacetylase family. It depends on Zn(2+) as a cofactor.

The enzyme catalyses 1D-myo-inositol 2-acetamido-2-deoxy-alpha-D-glucopyranoside + H2O = 1D-myo-inositol 2-amino-2-deoxy-alpha-D-glucopyranoside + acetate. In terms of biological role, catalyzes the deacetylation of 1D-myo-inositol 2-acetamido-2-deoxy-alpha-D-glucopyranoside (GlcNAc-Ins) in the mycothiol biosynthesis pathway. The sequence is that of 1D-myo-inositol 2-acetamido-2-deoxy-alpha-D-glucopyranoside deacetylase from Geodermatophilus obscurus (strain ATCC 25078 / DSM 43160 / JCM 3152 / CCUG 61914 / KCC A-0152 / KCTC 9177 / NBRC 13315 / NRRL B-3577 / G-20).